A 465-amino-acid polypeptide reads, in one-letter code: MSTPLIAGTGPSAVRQLISNAVQNDPVSGNFRCRRDIFTDAALFDYEMKYIFEQNWVFLAHESQVANPDDYLVSNIGRQPVIITRNKAGDVSAVINACSHRGAELCRRKQGNRSTFTCQFHGWTFSNTGKLLKVKDGQDDNYPEGFNVDGSHDLTRIPSFANYRGFLFGSMNPDACPIEEHLGGSKAILDQVIDQTPGELEVLRGSSSYIYDGNWKLQIENGADGYHVGSVHWNYVATIGRRDRTSDTIRTVDVTTWSKKNIGGTYTFEHGHMLLWTRLPNPEVRPVFARREELKARVGEEVADAIVNQTRNLCIYPNLYVMDQISTQIRVVRPISVDKTEVTIYCFAPRDESEEVRNARIRQYEDFFNVSGMGTPDDLEEFRACQSGYRGSAREWNDLSRGAPHWISGPDDNARRLGLAPLMSGARMEDEGLFVQQHTYWAETMLRGIEAEPKVFNVQPVEVAQ.

Residues 56–154 (WVFLAHESQV…GFNVDGSHDL (99 aa)) form the Rieske domain. Residues cysteine 98, histidine 100, cysteine 118, and histidine 121 each coordinate [2Fe-2S] cluster. 2 residues coordinate Fe cation: histidine 227 and histidine 232.

This sequence belongs to the bacterial ring-hydroxylating dioxygenase alpha subunit family. In terms of assembly, heterohexamer of 3 large (CbdA) subunits and 3 small (CbdB) subunits. The heterohexamer is part of 2-halobenzoate dioxygenase two component enzyme system. The other component is a NADH:acceptor reductase (CdbC). [2Fe-2S] cluster serves as cofactor. The cofactor is Fe(2+).

The enzyme catalyses a 2-halobenzoate + NADH + O2 + H(+) = a halide anion + catechol + CO2 + NAD(+). It participates in xenobiotic degradation; benzoate degradation via CoA ligation. Component of 2-halobenzoate dioxygenase multicomponent enzyme system which catalyzes the incorporation of both atoms of molecular oxygen into 2-halobenzoate to form catechol. This is 2-halobenzoate 1,2-dioxygenase large subunit (cbdA) from Burkholderia cepacia (Pseudomonas cepacia).